The primary structure comprises 126 residues: UPF0102 protein PMT_0624 (126 aa).

The protein belongs to the UPF0102 family.

This Prochlorococcus marinus (strain MIT 9313) protein is UPF0102 protein PMT_0624.